A 37-amino-acid polypeptide reads, in one-letter code: Large ribosomal subunit protein bL36 (37 aa).

The protein belongs to the bacterial ribosomal protein bL36 family.

The sequence is that of Large ribosomal subunit protein bL36 from Nocardia farcinica (strain IFM 10152).